A 191-amino-acid polypeptide reads, in one-letter code: Holliday junction branch migration complex subunit RuvA (191 aa).

The tract at residues 1–64 (MIGTLSGIIE…DNVPQLYGFT (64 aa)) is domain I. A domain II region spans residues 65–145 (DTEEQNCLKM…FNIMDKRGPS (81 aa)). A flexible linker region spans residues 146-149 (VEDS). The tract at residues 149–191 (SDALSALLSLGYEKTRVLNALEKVGVSHNLSDTVRFALKELSK) is domain III.

The protein belongs to the RuvA family. As to quaternary structure, homotetramer. Forms an RuvA(8)-RuvB(12)-Holliday junction (HJ) complex. HJ DNA is sandwiched between 2 RuvA tetramers; dsDNA enters through RuvA and exits via RuvB. An RuvB hexamer assembles on each DNA strand where it exits the tetramer. Each RuvB hexamer is contacted by two RuvA subunits (via domain III) on 2 adjacent RuvB subunits; this complex drives branch migration. In the full resolvosome a probable DNA-RuvA(4)-RuvB(12)-RuvC(2) complex forms which resolves the HJ.

The protein resides in the cytoplasm. In terms of biological role, the RuvA-RuvB-RuvC complex processes Holliday junction (HJ) DNA during genetic recombination and DNA repair, while the RuvA-RuvB complex plays an important role in the rescue of blocked DNA replication forks via replication fork reversal (RFR). RuvA specifically binds to HJ cruciform DNA, conferring on it an open structure. The RuvB hexamer acts as an ATP-dependent pump, pulling dsDNA into and through the RuvAB complex. HJ branch migration allows RuvC to scan DNA until it finds its consensus sequence, where it cleaves and resolves the cruciform DNA. In Anaplasma phagocytophilum (strain HZ), this protein is Holliday junction branch migration complex subunit RuvA.